Here is a 572-residue protein sequence, read N- to C-terminus: 2-isopropylmalate synthase (572 aa).

Residues 39-313 (PVWMSTDLRD…HPGLDFSRIN (275 aa)) form the Pyruvate carboxyltransferase domain. The Mg(2+) site is built by Asp-48, His-252, His-254, and Asn-288. The segment at 445–572 (VAAPYAYVEH…GVGRQVAATR (128 aa)) is regulatory domain.

Belongs to the alpha-IPM synthase/homocitrate synthase family. LeuA type 2 subfamily. As to quaternary structure, homodimer. Mg(2+) serves as cofactor.

It is found in the cytoplasm. The enzyme catalyses 3-methyl-2-oxobutanoate + acetyl-CoA + H2O = (2S)-2-isopropylmalate + CoA + H(+). It functions in the pathway amino-acid biosynthesis; L-leucine biosynthesis; L-leucine from 3-methyl-2-oxobutanoate: step 1/4. Catalyzes the condensation of the acetyl group of acetyl-CoA with 3-methyl-2-oxobutanoate (2-ketoisovalerate) to form 3-carboxy-3-hydroxy-4-methylpentanoate (2-isopropylmalate). This chain is 2-isopropylmalate synthase, found in Azoarcus sp. (strain BH72).